Reading from the N-terminus, the 378-residue chain is UPF0754 membrane protein BcerKBAB4_0766 (378 aa).

A run of 2 helical transmembrane segments spans residues 1 to 21 and 357 to 377; these read MNIW…GGYT and YLGA…LLFL.

The protein belongs to the UPF0754 family.

The protein localises to the cell membrane. This chain is UPF0754 membrane protein BcerKBAB4_0766, found in Bacillus mycoides (strain KBAB4) (Bacillus weihenstephanensis).